The sequence spans 857 residues: Catalase-peroxidase (857 aa).

The segment at residues 207–330 is a cross-link (tryptophyl-tyrosyl-methioninium (Trp-Tyr) (with M-356)); the sequence is WHSAGTYRVS…LAAVQMGLIY (124 aa). Histidine 208 functions as the Proton acceptor in the catalytic mechanism. Residues 330–356 constitute a cross-link (tryptophyl-tyrosyl-methioninium (Tyr-Met) (with W-207)); that stretch reads YVNPEGPNGKPDPIAAAKDIRETFGRM. Histidine 371 lines the heme b pocket.

This sequence belongs to the peroxidase family. Peroxidase/catalase subfamily. Homodimer or homotetramer. Heme b is required as a cofactor. In terms of processing, formation of the three residue Trp-Tyr-Met cross-link is important for the catalase, but not the peroxidase activity of the enzyme.

It carries out the reaction H2O2 + AH2 = A + 2 H2O. It catalyses the reaction 2 H2O2 = O2 + 2 H2O. Functionally, bifunctional enzyme with both catalase and broad-spectrum peroxidase activity. The sequence is that of Catalase-peroxidase from Rhodopirellula baltica (strain DSM 10527 / NCIMB 13988 / SH1).